Consider the following 117-residue polypeptide: Protein Wnt-10b (117 aa).

S1 carries the O-palmitoleoyl serine; by PORCN lipid modification. Cysteines 83 and 98 form a disulfide. N84 carries N-linked (GlcNAc...) asparagine glycosylation.

The protein belongs to the Wnt family. Post-translationally, palmitoleoylation is required for efficient binding to frizzled receptors. Depalmitoleoylation leads to Wnt signaling pathway inhibition.

The protein localises to the secreted. It is found in the extracellular space. It localises to the extracellular matrix. In terms of biological role, member of the Wnt ligand gene family that encodes for secreted proteins, which activate the Wnt signaling cascade. Involved in neurogenesis. Performs a partially redundant function with wnt1 in the formation of the midbrain-hindbrain boundary (MHB) organizer. The sequence is that of Protein Wnt-10b (WNT-10B) from Plethodon jordani (Red-cheeked salamander).